The primary structure comprises 340 residues: uncharacterized protein (340 aa).

The protein resides in the virion. This is an uncharacterized protein from Acanthamoeba polyphaga (Amoeba).